A 1035-amino-acid chain; its full sequence is Glycine dehydrogenase (decarboxylating), mitochondrial (1035 aa).

A mitochondrion-targeting transit peptide spans 1–64 (MERARKLANR…KSFNTQQARS (64 aa)). N6-(pyridoxal phosphate)lysine is present on Lys771.

Belongs to the GcvP family. Homodimer. The glycine cleavage system is composed of four proteins: P, T, L and H. Pyridoxal 5'-phosphate serves as cofactor.

Its subcellular location is the mitochondrion. The catalysed reaction is N(6)-[(R)-lipoyl]-L-lysyl-[glycine-cleavage complex H protein] + glycine + H(+) = N(6)-[(R)-S(8)-aminomethyldihydrolipoyl]-L-lysyl-[glycine-cleavage complex H protein] + CO2. Functionally, the glycine cleavage system catalyzes the degradation of glycine. The P protein binds the alpha-amino group of glycine through its pyridoxal phosphate cofactor; CO(2) is released and the remaining methylamine moiety is then transferred to the lipoamide cofactor of the H protein. The chain is Glycine dehydrogenase (decarboxylating), mitochondrial (GDCSP) from Solanum tuberosum (Potato).